A 368-amino-acid chain; its full sequence is Single-stranded DNA-binding protein 3 (368 aa).

A LisH domain is found at 16–48 (AREKLALYVYEYLLHVGAQKSAQTFLSEIRWEK). The tract at residues 100–368 (PVLGNIPPND…NYSPSMTMSV (269 aa)) is disordered. Positions 126–139 (GSQPSPHAQPPPHN) are enriched in pro residues. Low complexity-rich tracts occupy residues 174–189 (PNMG…PRGM), 211–220 (GPGMPGINMG), and 230–248 (PSSA…TYVG). Residues 252–262 (GGGPPGTPIMP) are compositionally biased toward pro residues. A compositionally biased stretch (polar residues) spans 265–276 (ADSTNSSDNIYT). Positions 295–305 (GSDGPMGGMGG) are enriched in gly residues. Residues 326-337 (NSPNNISGISNP) are compositionally biased toward low complexity. Positions 353-368 (HSFQNDNYSPSMTMSV) are enriched in polar residues.

In terms of tissue distribution, expressed in embryonic fibroblasts and chondrocytes.

It is found in the nucleus. May be involved in transcription regulation of the alpha 2(I) collagen gene where it binds to the single-stranded polypyrimidine sequences in the promoter region. The protein is Single-stranded DNA-binding protein 3 (SSBP3) of Gallus gallus (Chicken).